An 890-amino-acid chain; its full sequence is Putative RNA-binding protein 15B (890 aa).

The disordered stretch occupies residues 1–133; the sequence is MKRQSERDSS…AEPACPGSSA (133 aa). Over residues 10-20 the composition is skewed to low complexity; it reads SPSGRGSSSSA. Composition is skewed to basic and acidic residues over residues 22-34 and 66-78; these read RPRE…EAGG and GHRD…DANH. Residues 86–99 show a composition bias toward gly residues; it reads SGSGAGGGGRGGKA. Phosphoserine is present on residues Ser-109 and Ser-113. Residues 113 to 124 show a composition bias toward pro residues; the sequence is SPLPPPPPPPGA. Residues 139–219 enclose the RRM 1 domain; the sequence is KTLLISSLSP…RPLKVEPVYL (81 aa). Lys-213 is covalently cross-linked (Glycyl lysine isopeptide (Lys-Gly) (interchain with G-Cter in SUMO2)). The segment at 219–253 is disordered; the sequence is LRGGGGSSRRSSSSSAAASTPPPGPPAPADPLGYL. The segment covering 226 to 237 has biased composition (low complexity); that stretch reads SRRSSSSSAAAS. The span at 238-247 shows a compositional bias: pro residues; the sequence is TPPPGPPAPA. Phosphoserine occurs at positions 265 and 267. 2 RRM domains span residues 337–414 and 418–492; these read RNLF…YGKA and TRLW…FAKA. Thr-532 is modified (phosphothreonine). The tract at residues 547–705 is disordered; the sequence is EGDWTSPSKS…KPLEEPKHET (159 aa). Phosphoserine occurs at positions 552, 556, and 562. Composition is skewed to basic and acidic residues over residues 573–616 and 626–646; these read RSGE…ERSR and RGSD…EGTK. The Nuclear localization signal motif lies at 593–597; sequence RRKRR. The segment covering 647–657 has biased composition (low complexity); that stretch reads ESSSNSLSNSR. A compositionally biased stretch (basic and acidic residues) spans 671-703; the sequence is EAADSSHGKKARDSERNHRTTEAEPKPLEEPKH. A Glycyl lysine isopeptide (Lys-Gly) (interchain with G-Cter in SUMO2) cross-link involves residue Lys-702. In terms of domain architecture, SPOC spans 711–889; sequence LSEYAQTLQL…HMVIVIVRDT (179 aa). The segment at 722–890 is interaction with Epstein-Barr virus BMLF1; sequence WNGLLVLKNS…MVIVIVRDTA (169 aa).

The protein belongs to the RRM Spen family. In terms of assembly, component of the WMM complex, a N6-methyltransferase complex composed of a catalytic subcomplex, named MAC, and of an associated subcomplex, named MACOM. The MAC subcomplex is composed of METTL3 and METTL14. The MACOM subcomplex is composed of WTAP, ZC3H13, CBLL1/HAKAI, VIRMA, and, in some cases of RBM15 (RBM15 or RBM15B). May interact with NCOR2. Interacts with NXF1, the interaction is required to promote mRNA export. As to quaternary structure, (Microbial infection) Interacts (via the SPOC domain) with Epstein-Barr virus BMLF1 (via the N-terminus); the interaction is direct. As to expression, ubiquitously expressed.

The protein localises to the nucleus. It is found in the nucleoplasm. Its subcellular location is the nucleus speckle. The protein resides in the nucleus envelope. RNA-binding protein that acts as a key regulator of N6-methyladenosine (m6A) methylation of RNAs, thereby regulating different processes, such as alternative splicing of mRNAs and X chromosome inactivation mediated by Xist RNA. Associated component of the WMM complex, a complex that mediates N6-methyladenosine (m6A) methylation of RNAs, a modification that plays a role in the efficiency of mRNA splicing and RNA processing. Plays a key role in m6A methylation, possibly by binding target RNAs and recruiting the WMM complex. Involved in random X inactivation mediated by Xist RNA: acts by binding Xist RNA and recruiting the WMM complex, which mediates m6A methylation, leading to target YTHDC1 reader on Xist RNA and promoting transcription repression activity of Xist. Functions in the regulation of alternative or illicit splicing, possibly by regulating m6A methylation. Inhibits pre-mRNA splicing. Also functions as a mRNA export factor by acting as a cofactor for the nuclear export receptor NXF1. The sequence is that of Putative RNA-binding protein 15B from Homo sapiens (Human).